A 319-amino-acid chain; its full sequence is HTH-type transcriptional regulator YidZ (319 aa).

One can recognise an HTH lysR-type domain in the interval 8-65; it reads LDLNLLLCLQLLMQERSVTKAAKRMNVTPSAVSKSLSKLRTWFDDPLFVNTPLGLTPT. Residues 25-44 constitute a DNA-binding region (H-T-H motif); the sequence is VTKAAKRMNVTPSAVSKSLS.

This sequence belongs to the LysR transcriptional regulatory family.

Involved in anaerobic NO protection. This is HTH-type transcriptional regulator YidZ from Citrobacter koseri (strain ATCC BAA-895 / CDC 4225-83 / SGSC4696).